A 493-amino-acid polypeptide reads, in one-letter code: UDP-N-acetylmuramoyl-L-alanyl-D-glutamate--2,6-diaminopimelate ligase (493 aa).

UDP-N-acetyl-alpha-D-muramoyl-L-alanyl-D-glutamate-binding residues include Leu-30 and Ser-32. 117 to 123 (GTNGKTT) contributes to the ATP binding site. UDP-N-acetyl-alpha-D-muramoyl-L-alanyl-D-glutamate contacts are provided by residues Asn-158, 159 to 160 (TT), Ser-186, Gln-192, and Arg-194. Lys-226 carries the N6-carboxylysine modification. Meso-2,6-diaminopimelate is bound by residues Arg-388, 412–415 (DNPR), Gly-463, and Glu-467. A Meso-diaminopimelate recognition motif motif is present at residues 412–415 (DNPR).

The protein belongs to the MurCDEF family. MurE subfamily. The cofactor is Mg(2+). Post-translationally, carboxylation is probably crucial for Mg(2+) binding and, consequently, for the gamma-phosphate positioning of ATP.

It is found in the cytoplasm. It catalyses the reaction UDP-N-acetyl-alpha-D-muramoyl-L-alanyl-D-glutamate + meso-2,6-diaminopimelate + ATP = UDP-N-acetyl-alpha-D-muramoyl-L-alanyl-gamma-D-glutamyl-meso-2,6-diaminopimelate + ADP + phosphate + H(+). The protein operates within cell wall biogenesis; peptidoglycan biosynthesis. Functionally, catalyzes the addition of meso-diaminopimelic acid to the nucleotide precursor UDP-N-acetylmuramoyl-L-alanyl-D-glutamate (UMAG) in the biosynthesis of bacterial cell-wall peptidoglycan. This is UDP-N-acetylmuramoyl-L-alanyl-D-glutamate--2,6-diaminopimelate ligase from Vibrio vulnificus (strain YJ016).